The chain runs to 709 residues: Elongation factor G (709 aa).

The 290-residue stretch at 8 to 297 (ANTRNIGIMA…AVIDYLPSPL (290 aa)) folds into the tr-type G domain. GTP contacts are provided by residues 17–24 (AHVDAGKT), 81–85 (DTPGH), and 135–138 (NKMD).

Belongs to the TRAFAC class translation factor GTPase superfamily. Classic translation factor GTPase family. EF-G/EF-2 subfamily.

Its subcellular location is the cytoplasm. Catalyzes the GTP-dependent ribosomal translocation step during translation elongation. During this step, the ribosome changes from the pre-translocational (PRE) to the post-translocational (POST) state as the newly formed A-site-bound peptidyl-tRNA and P-site-bound deacylated tRNA move to the P and E sites, respectively. Catalyzes the coordinated movement of the two tRNA molecules, the mRNA and conformational changes in the ribosome. The chain is Elongation factor G from Lactococcus lactis subsp. cremoris (strain MG1363).